Consider the following 162-residue polypeptide: MAREVISTSILMIATVVAVTAAIMVILPAVKDLAHSYTSVSGNLNEKVETDIEIIFVKVTGDATKVNVYFWVKNTGSTRLDADLVRMSDIFFTSSTTYLHFTGSDTGVTFTIENGDGDEYWERGETLKVAVENIDANQMPQDEYLLTFVLYNGVRANDYFSW.

The N-terminal stretch at 1–34 (MAREVISTSILMIATVVAVTAAIMVILPAVKDLA) is a signal peptide.

This is an uncharacterized protein from Archaeoglobus fulgidus (strain ATCC 49558 / DSM 4304 / JCM 9628 / NBRC 100126 / VC-16).